A 72-amino-acid chain; its full sequence is Translation initiation factor IF-1 (72 aa).

In terms of domain architecture, S1-like spans 1–72 (MAKDDVIEID…DKGRITYRYK (72 aa)).

Belongs to the IF-1 family. As to quaternary structure, component of the 30S ribosomal translation pre-initiation complex which assembles on the 30S ribosome in the order IF-2 and IF-3, IF-1 and N-formylmethionyl-tRNA(fMet); mRNA recruitment can occur at any time during PIC assembly.

The protein resides in the cytoplasm. One of the essential components for the initiation of protein synthesis. Stabilizes the binding of IF-2 and IF-3 on the 30S subunit to which N-formylmethionyl-tRNA(fMet) subsequently binds. Helps modulate mRNA selection, yielding the 30S pre-initiation complex (PIC). Upon addition of the 50S ribosomal subunit IF-1, IF-2 and IF-3 are released leaving the mature 70S translation initiation complex. The polypeptide is Translation initiation factor IF-1 (Campylobacter fetus subsp. fetus (strain 82-40)).